The chain runs to 353 residues: Rhodopsin (353 aa).

The Extracellular portion of the chain corresponds to Met-1–Ala-36. Asn-2 and Asn-15 each carry an N-linked (GlcNAc...) asparagine glycan. The chain crosses the membrane as a helical span at residues Tyr-37–Val-61. Residues Thr-62–Asn-73 lie on the Cytoplasmic side of the membrane. Residues Tyr-74 to Tyr-96 form a helical membrane-spanning segment. The Extracellular segment spans residues Thr-97 to Cys-110. A disulfide bond links Cys-110 and Cys-187. The chain crosses the membrane as a helical span at residues Asn-111–Ile-133. Residues Glu-134–Trp-136 carry the 'Ionic lock' involved in activated form stabilization motif. Topologically, residues Glu-134–His-152 are cytoplasmic. The helical transmembrane segment at Ala-153–Val-173 threads the bilayer. Residues Gly-174 to Ser-202 lie on the Extracellular side of the membrane. N-linked (GlcNAc...) asparagine glycosylation is present at Asn-200. A helical transmembrane segment spans residues Phe-203–Gly-224. Topologically, residues Arg-225–Arg-252 are cytoplasmic. A helical transmembrane segment spans residues Met-253–Tyr-274. At Ile-275–Leu-286 the chain is on the extracellular side. The chain crosses the membrane as a helical span at residues Phe-287–Cys-308. Lys-296 is subject to N6-(retinylidene)lysine. Residues Met-309 to Ala-353 lie on the Cytoplasmic side of the membrane. S-palmitoyl cysteine attachment occurs at residues Cys-322 and Cys-323. A disordered region spans residues Glu-330–Ala-353. The span at Ala-334–Ala-353 shows a compositional bias: low complexity.

It belongs to the G-protein coupled receptor 1 family. Opsin subfamily. Phosphorylated on some or all of the serine and threonine residues present in the C-terminal region. Post-translationally, contains one covalently linked retinal chromophore.

It is found in the membrane. It localises to the cell projection. The protein resides in the cilium. Its subcellular location is the photoreceptor outer segment. Its function is as follows. Photoreceptor required for image-forming vision at low light intensity. While most salt water fish species use retinal as chromophore, most freshwater fish use 3-dehydroretinal, or a mixture of retinal and 3-dehydroretinal. Light-induced isomerization of 11-cis to all-trans retinal triggers a conformational change that activates signaling via G-proteins. Subsequent receptor phosphorylation mediates displacement of the bound G-protein alpha subunit by arrestin and terminates signaling. In Chelon labrosus (Thicklip grey mullet), this protein is Rhodopsin (rho).